Reading from the N-terminus, the 319-residue chain is Telomere-binding protein cav (319 aa).

Residues 107–312 form a required for binding to Su(var)205 region; it reads RRKMVQPYPE…SISFQNSGSE (206 aa). 2 disordered regions span residues 141–163 and 186–248; these read WQKQ…DNEV and PSDL…PDYY. 2 consecutive short sequence motifs (su(var)205-binding Pro-containing repeat) follow at residues 220-224 and 273-279; these read PETQM and PETEMNE. Residues 291–311 are compositionally biased toward polar residues; sequence SMSIGPSINSDGSISFQNSGS. Positions 291 to 319 are disordered; it reads SMSIGPSINSDGSISFQNSGSEPIDVDVN.

Interacts (via C-terminus) with Su(var)205 dimer (via hinge and chromoshadow domain) and with moi to form the terminin, telomere-capping, complex. Interacts with HP6, which is also part of the terminin complex.

It is found in the nucleus. It localises to the chromosome. The protein localises to the telomere. Binds to chromosome ends in a sequence-dependent manner and is required for telomere capping. The polypeptide is Telomere-binding protein cav (Drosophila yakuba (Fruit fly)).